We begin with the raw amino-acid sequence, 293 residues long: Formamidopyrimidine-DNA glycosylase (293 aa).

The Schiff-base intermediate with DNA role is filled by proline 2. Catalysis depends on glutamate 3, which acts as the Proton donor. Lysine 58 (proton donor; for beta-elimination activity) is an active-site residue. DNA is bound by residues histidine 104, arginine 123, and lysine 166. The FPG-type zinc-finger motif lies at 257 to 293; the sequence is AVYDRESEPCRTKGCGGVVKRFVQNGRSTFCCPKCQK. Arginine 283 serves as the catalytic Proton donor; for delta-elimination activity.

It belongs to the FPG family. Monomer. The cofactor is Zn(2+).

It carries out the reaction Hydrolysis of DNA containing ring-opened 7-methylguanine residues, releasing 2,6-diamino-4-hydroxy-5-(N-methyl)formamidopyrimidine.. It catalyses the reaction 2'-deoxyribonucleotide-(2'-deoxyribose 5'-phosphate)-2'-deoxyribonucleotide-DNA = a 3'-end 2'-deoxyribonucleotide-(2,3-dehydro-2,3-deoxyribose 5'-phosphate)-DNA + a 5'-end 5'-phospho-2'-deoxyribonucleoside-DNA + H(+). Its function is as follows. Involved in base excision repair of DNA damaged by oxidation or by mutagenic agents. Acts as a DNA glycosylase that recognizes and removes damaged bases. Has a preference for oxidized purines, such as 7,8-dihydro-8-oxoguanine (8-oxoG). Has AP (apurinic/apyrimidinic) lyase activity and introduces nicks in the DNA strand. Cleaves the DNA backbone by beta-delta elimination to generate a single-strand break at the site of the removed base with both 3'- and 5'-phosphates. The protein is Formamidopyrimidine-DNA glycosylase of Rhodopseudomonas palustris (strain BisA53).